The following is a 242-amino-acid chain: MLNNGSSTPLYIQLKQIITDDIKKGVYSPTAKLPTENELCTKYNVSRITVRKAILDLVEEGYLIRQQGKGTFVKSPKLKRELIAVNGYSEFMESTGKKPKHHVLSHDIIPASKPIAEKLQIQPESPVVELKRILYNDDQPLTFEVTHYPLDLFPGIDTFIADGVSMHDILKQQYKVVPTHNTKLLNVVYAQQEESKYLDCDIGDALFEIDKTAFTSNDQPIYCSLFLMHTNRVTFTINSPYT.

Residues 8–76 (TPLYIQLKQI…QGKGTFVKSP (69 aa)) form the HTH gntR-type domain. A DNA-binding region (H-T-H motif) is located at residues 36–55 (ENELCTKYNVSRITVRKAIL).

This is an uncharacterized protein from Bacillus subtilis (strain 168).